Consider the following 317-residue polypeptide: Beta-ketoacyl-[acyl-carrier-protein] synthase III (317 aa).

Catalysis depends on residues C112 and H244. The ACP-binding stretch occupies residues 245 to 249 (QANLR). N274 is a catalytic residue.

It belongs to the thiolase-like superfamily. FabH family. Homodimer.

It is found in the cytoplasm. It catalyses the reaction malonyl-[ACP] + acetyl-CoA + H(+) = 3-oxobutanoyl-[ACP] + CO2 + CoA. It functions in the pathway lipid metabolism; fatty acid biosynthesis. In terms of biological role, catalyzes the condensation reaction of fatty acid synthesis by the addition to an acyl acceptor of two carbons from malonyl-ACP. Catalyzes the first condensation reaction which initiates fatty acid synthesis and may therefore play a role in governing the total rate of fatty acid production. Possesses both acetoacetyl-ACP synthase and acetyl transacylase activities. Its substrate specificity determines the biosynthesis of branched-chain and/or straight-chain of fatty acids. This chain is Beta-ketoacyl-[acyl-carrier-protein] synthase III, found in Pectobacterium atrosepticum (strain SCRI 1043 / ATCC BAA-672) (Erwinia carotovora subsp. atroseptica).